The primary structure comprises 143 residues: ATP synthase subunit b' (143 aa).

The helical transmembrane segment at 6 to 26 threads the bilayer; the sequence is ATLPLMALQFLVLAVVLNAVF.

It belongs to the ATPase B chain family. F-type ATPases have 2 components, F(1) - the catalytic core - and F(0) - the membrane proton channel. F(1) has five subunits: alpha(3), beta(3), gamma(1), delta(1), epsilon(1). F(0) has four main subunits: a(1), b(1), b'(1) and c(10-14). The alpha and beta chains form an alternating ring which encloses part of the gamma chain. F(1) is attached to F(0) by a central stalk formed by the gamma and epsilon chains, while a peripheral stalk is formed by the delta, b and b' chains.

The protein localises to the cellular thylakoid membrane. F(1)F(0) ATP synthase produces ATP from ADP in the presence of a proton or sodium gradient. F-type ATPases consist of two structural domains, F(1) containing the extramembraneous catalytic core and F(0) containing the membrane proton channel, linked together by a central stalk and a peripheral stalk. During catalysis, ATP synthesis in the catalytic domain of F(1) is coupled via a rotary mechanism of the central stalk subunits to proton translocation. Its function is as follows. Component of the F(0) channel, it forms part of the peripheral stalk, linking F(1) to F(0). The b'-subunit is a diverged and duplicated form of b found in plants and photosynthetic bacteria. The sequence is that of ATP synthase subunit b' from Gloeothece citriformis (strain PCC 7424) (Cyanothece sp. (strain PCC 7424)).